Here is a 323-residue protein sequence, read N- to C-terminus: D-alanine--D-alanine ligase (323 aa).

The ATP-grasp domain occupies 121 to 317 (RIWFLTNNIN…FTNLIEEIIK (197 aa)). ATP is bound at residue 147–199 (PMKRPYVIKPLAQGSSIGVEVIFAEDDFNFADYDFPYGDQVIIEQYIKGQGRE). E270, E284, and N286 together coordinate Mg(2+).

The protein belongs to the D-alanine--D-alanine ligase family. The cofactor is Mg(2+). Mn(2+) is required as a cofactor.

Its subcellular location is the cytoplasm. It catalyses the reaction 2 D-alanine + ATP = D-alanyl-D-alanine + ADP + phosphate + H(+). The protein operates within cell wall biogenesis; peptidoglycan biosynthesis. In terms of biological role, cell wall formation. The protein is D-alanine--D-alanine ligase of Rickettsia peacockii (strain Rustic).